Here is a 197-residue protein sequence, read N- to C-terminus: Phosphoheptose isomerase (197 aa).

The SIS domain maps to 37–197 (MLQCLMNDGK…CIDSVLLEGM (161 aa)). Substrate is bound at residue 52–54 (NGG). Residues His-61 and Glu-65 each contribute to the Zn(2+) site. Substrate is bound by residues Glu-65, 94–95 (ND), 120–122 (STS), Ser-125, and Gln-175. Positions 175 and 183 each coordinate Zn(2+).

This sequence belongs to the SIS family. GmhA subfamily. Homotetramer. Zn(2+) serves as cofactor.

The protein localises to the cytoplasm. The enzyme catalyses 2 D-sedoheptulose 7-phosphate = D-glycero-alpha-D-manno-heptose 7-phosphate + D-glycero-beta-D-manno-heptose 7-phosphate. The protein operates within carbohydrate biosynthesis; D-glycero-D-manno-heptose 7-phosphate biosynthesis; D-glycero-alpha-D-manno-heptose 7-phosphate and D-glycero-beta-D-manno-heptose 7-phosphate from sedoheptulose 7-phosphate: step 1/1. Its function is as follows. Catalyzes the isomerization of sedoheptulose 7-phosphate in D-glycero-D-manno-heptose 7-phosphate. The chain is Phosphoheptose isomerase from Neisseria gonorrhoeae (strain ATCC 700825 / FA 1090).